Here is a 1406-residue protein sequence, read N- to C-terminus: DNA-directed RNA polymerase subunit beta' (1406 aa).

The Zn(2+) site is built by cysteine 72, cysteine 74, cysteine 87, and cysteine 90. Positions 462, 464, and 466 each coordinate Mg(2+). Residues cysteine 816, cysteine 889, cysteine 896, and cysteine 899 each contribute to the Zn(2+) site.

Belongs to the RNA polymerase beta' chain family. The RNAP catalytic core consists of 2 alpha, 1 beta, 1 beta' and 1 omega subunit. When a sigma factor is associated with the core the holoenzyme is formed, which can initiate transcription. Requires Mg(2+) as cofactor. Zn(2+) is required as a cofactor.

It carries out the reaction RNA(n) + a ribonucleoside 5'-triphosphate = RNA(n+1) + diphosphate. DNA-dependent RNA polymerase catalyzes the transcription of DNA into RNA using the four ribonucleoside triphosphates as substrates. This Psychrobacter sp. (strain PRwf-1) protein is DNA-directed RNA polymerase subunit beta'.